We begin with the raw amino-acid sequence, 313 residues long: MTQSSNQTKDRVQRLGKVAVLMGGVAAERDVSLRSGAEVLKALKSEGVDAVGCDVTSVAQLVEIAQKYDRAFIALHGRWGEDGGVQAVLDSLALPYTGSGMTASALAMDKLRTKWLWKGVGLPTPAFIVVSPSRPLDVETFDLTFPVIVKPSHEGSSIGMRKVDTLDALQEAVDFAQQYDSEILIEQWITGREFTCAVLDGEALPMIQLKTDHDFYDFDAKYQSNTTEYLCPCGLEIAEEKRIQALVLQAFDAVGARHWGRVDLMLDDQNQPWLIEINTVPGMTDHSLVPMAAKAVDLSFSKLVLKLISLTLP.

The 196-residue stretch at 114–309 (KWLWKGVGLP…FSKLVLKLIS (196 aa)) folds into the ATP-grasp domain. Position 142-195 (142-195 (DLTFPVIVKPSHEGSSIGMRKVDTLDALQEAVDFAQQYDSEILIEQWITGREFT)) interacts with ATP. Mg(2+) contacts are provided by Asp263, Glu276, and Asn278.

It belongs to the D-alanine--D-alanine ligase family. Requires Mg(2+) as cofactor. The cofactor is Mn(2+).

Its subcellular location is the cytoplasm. The enzyme catalyses 2 D-alanine + ATP = D-alanyl-D-alanine + ADP + phosphate + H(+). It functions in the pathway cell wall biogenesis; peptidoglycan biosynthesis. Functionally, cell wall formation. This chain is D-alanine--D-alanine ligase, found in Hydrogenovibrio crunogenus (strain DSM 25203 / XCL-2) (Thiomicrospira crunogena).